The following is a 298-amino-acid chain: Nucleotide-binding protein MAV_3359 (298 aa).

Position 18–25 (18–25 (GLSGAGRG)) interacts with ATP. Residue 69–72 (DVRS) participates in GTP binding.

The protein belongs to the RapZ-like family.

Functionally, displays ATPase and GTPase activities. In Mycobacterium avium (strain 104), this protein is Nucleotide-binding protein MAV_3359.